Consider the following 91-residue polypeptide: Mercuric transport protein periplasmic component (91 aa).

An N-terminal signal peptide occupies residues 1 to 19; that stretch reads MKKLFASLALAAVVAPVWA. The 67-residue stretch at 22 to 88 folds into the HMA domain; it reads QTVTLSVPGM…ATADAGYPSS (67 aa). The Hg(2+) site is built by Cys-33 and Cys-36.

The protein belongs to the MerP family. In terms of assembly, monomer.

It localises to the periplasm. Involved in mercury resistance. Acts as a mercury scavenger that specifically binds to a mercuric ion in the periplasm and probably passes it to the cytoplasmic mercuric reductase MerA via the mercuric transport protein MerT. In Pseudomonas aeruginosa, this protein is Mercuric transport protein periplasmic component.